The primary structure comprises 326 residues: Beta-ketoacyl-[acyl-carrier-protein] synthase III (326 aa).

Catalysis depends on residues C112 and H251. Positions 252 to 256 (QANSR) are ACP-binding. N281 is an active-site residue.

It belongs to the thiolase-like superfamily. FabH family. Homodimer.

The protein localises to the cytoplasm. The enzyme catalyses malonyl-[ACP] + acetyl-CoA + H(+) = 3-oxobutanoyl-[ACP] + CO2 + CoA. It functions in the pathway lipid metabolism; fatty acid biosynthesis. Its function is as follows. Catalyzes the condensation reaction of fatty acid synthesis by the addition to an acyl acceptor of two carbons from malonyl-ACP. Catalyzes the first condensation reaction which initiates fatty acid synthesis and may therefore play a role in governing the total rate of fatty acid production. Possesses both acetoacetyl-ACP synthase and acetyl transacylase activities. Its substrate specificity determines the biosynthesis of branched-chain and/or straight-chain of fatty acids. This chain is Beta-ketoacyl-[acyl-carrier-protein] synthase III, found in Clostridium botulinum (strain Kyoto / Type A2).